The following is a 359-amino-acid chain: Trans-enoyl reductase mpsG (359 aa).

Tyrosine 212, leucine 259, and threonine 278 together coordinate NADP(+).

The protein belongs to the zinc-containing alcohol dehydrogenase family. As to quaternary structure, monomer.

It participates in secondary metabolite biosynthesis. Functionally, trans-enoyl reductase; part of the gene cluster that mediates the biosynthesis of macrophasetins, 3-decalinoyltetramic acids (DTAs) which feature a tetramate (pyrrolidine-2,4-dione) unit connected to a decalin fragment and that have potent bioactivities. The PKS-NRPS mpsA together with its associated enoylreductase partner mpsG incorporate one unit of acetyl-CoA, seven units of malonyl-CoA, and one unit of L-alanine to assemble the linear tetramic acid intermediate corresponding to the backbone of macrophasetins. Without the Diels-Alderase mpsD, the mpsA/G product can undergo the non-enzymatic intramolecular Diels-Alder (IMDA) reaction to generate both macrophasetin A and macrophasetin B. Catalyzed by mpsD, the linear tetramic acid intermediate is thoroughly converted to macrophasetin A via the endo-IMDA reaction in a regioselective and stereoselective manner. Finally, the cytochrome P450 monooxygenase mpsF catalyzes the hydroxylation at C20 to yield the end product macrophasetin C. In Macrophomina phaseolina (strain MS6) (Charcoal rot fungus), this protein is Trans-enoyl reductase mpsG.